The following is a 300-amino-acid chain: 4-hydroxy-tetrahydrodipicolinate synthase (300 aa).

Thr-49 is a binding site for pyruvate. Tyr-137 serves as the catalytic Proton donor/acceptor. The Schiff-base intermediate with substrate role is filled by Lys-165. Ile-207 contributes to the pyruvate binding site.

The protein belongs to the DapA family. In terms of assembly, homotetramer; dimer of dimers.

Its subcellular location is the cytoplasm. The catalysed reaction is L-aspartate 4-semialdehyde + pyruvate = (2S,4S)-4-hydroxy-2,3,4,5-tetrahydrodipicolinate + H2O + H(+). It functions in the pathway amino-acid biosynthesis; L-lysine biosynthesis via DAP pathway; (S)-tetrahydrodipicolinate from L-aspartate: step 3/4. Functionally, catalyzes the condensation of (S)-aspartate-beta-semialdehyde [(S)-ASA] and pyruvate to 4-hydroxy-tetrahydrodipicolinate (HTPA). This is 4-hydroxy-tetrahydrodipicolinate synthase from Nitrosospira multiformis (strain ATCC 25196 / NCIMB 11849 / C 71).